We begin with the raw amino-acid sequence, 127 residues long: Large ribosomal subunit protein eL32 (127 aa).

Over residues 38 to 48 the composition is skewed to basic and acidic residues; it reads WRRPKGIDSKM. The disordered stretch occupies residues 38–66; the sequence is WRRPKGIDSKMRLKKKGKPRSPSIGWSSP.

Belongs to the eukaryotic ribosomal protein eL32 family.

The protein is Large ribosomal subunit protein eL32 of Thermococcus gammatolerans (strain DSM 15229 / JCM 11827 / EJ3).